The primary structure comprises 52 residues: Phospholamban (52 aa).

At Met-1 the chain carries N-acetylmethionine. Residues 1-31 (MDKVQYLTRSAIRRASTIEMPQQARQNLQNL) lie on the Cytoplasmic side of the membrane. Ser-16 carries the post-translational modification Phosphoserine; by PKA and DMPK. A Phosphothreonine; by CaMK2 modification is found at Thr-17. Residues 32–52 (FINFCLILICLLLICIIVMLL) traverse the membrane as a helical segment. Residue Cys-36 is the site of S-palmitoyl cysteine attachment.

Belongs to the phospholamban family. As to quaternary structure, homopentamer. Can also form heterooligomers with other sarcoplasmic/endoplasmic reticulum calcium ATPase (SERCA) regulators ARLN, ERLN, SLN and STRIT1/DWORF. Monomer. Interacts with HAX1. Interacts as a monomer with ATP2A2; the interaction decreases ATP2A2 Ca(2+) affinity. Interacts with VMP1; VMP1 competes with PLN and SLN to prevent them from forming an inhibitory complex with ATP2A2. Interacts with S100A1 in a Ca(2+)-dependent manner. Phosphorylation by DMPK may stimulate sarcoplasmic reticulum calcium uptake in cardiomyocytes. Phosphorylation by PKA abolishes the inhibition of ATP2A2-mediated calcium uptake. Phosphorylated at Thr-17 by CaMK2, and in response to beta-adrenergic stimulation. In terms of processing, palmitoylated by ZDHHC16, promoting formation of the homopentamer. Post-translationally, in elongated spermatids, proteolytically cleaved by SPPL2C which modulates intracellular Ca(2+) homeostasis. In terms of tissue distribution, heart.

It is found in the endoplasmic reticulum membrane. Its subcellular location is the sarcoplasmic reticulum membrane. The protein localises to the mitochondrion membrane. The protein resides in the membrane. In terms of biological role, reversibly inhibits the activity of ATP2A2/SERCA2 in cardiac sarcoplasmic reticulum by decreasing the apparent affinity of the ATPase for Ca(2+). Binds preferentially to the ATP-bound E1 conformational form of ATP2A2 which predominates at low Ca(2+) concentrations during the diastolic phase of the cardiac cycle. Inhibits ATP2A2 Ca(2+) affinity by disrupting its allosteric activation by ATP. Modulates the contractility of the heart muscle in response to physiological stimuli via its effects on ATP2A2. Modulates calcium re-uptake during muscle relaxation and plays an important role in calcium homeostasis in the heart muscle. The degree of ATP2A2 inhibition depends on the oligomeric state of PLN. ATP2A2 inhibition is alleviated by PLN phosphorylation. Also inhibits the activity of ATP2A3/SERCA3. Controls intracellular Ca(2+) levels in elongated spermatids and may play a role in germ cell differentiation. In the thalamic reticular nucleus of the brain, plays a role in the regulation of sleep patterns and executive functioning. This Canis lupus familiaris (Dog) protein is Phospholamban.